A 445-amino-acid chain; its full sequence is Tubulin beta-1 chain (445 aa).

The short motif at 1–4 (MREI) is the MREI motif element. Gln11, Glu69, Ser138, Gly142, Thr143, Gly144, Asn204, and Asn226 together coordinate GTP. Glu69 contributes to the Mg(2+) binding site. The tract at residues 424 to 445 (QYQDATADEQGEFEEEGEEDEA) is disordered. Acidic residues predominate over residues 429 to 445 (TADEQGEFEEEGEEDEA). Position 438 is a 5-glutamyl polyglutamate (Glu438).

The protein belongs to the tubulin family. As to quaternary structure, dimer of alpha and beta chains. A typical microtubule is a hollow water-filled tube with an outer diameter of 25 nm and an inner diameter of 15 nM. Alpha-beta heterodimers associate head-to-tail to form protofilaments running lengthwise along the microtubule wall with the beta-tubulin subunit facing the microtubule plus end conferring a structural polarity. Microtubules usually have 13 protofilaments but different protofilament numbers can be found in some organisms and specialized cells. It depends on Mg(2+) as a cofactor. In terms of processing, some glutamate residues at the C-terminus are polyglycylated, resulting in polyglycine chains on the gamma-carboxyl group. Glycylation is mainly limited to tubulin incorporated into axonemes (cilia and flagella) whereas glutamylation is prevalent in neuronal cells, centrioles, axonemes, and the mitotic spindle. Both modifications can coexist on the same protein on adjacent residues, and lowering polyglycylation levels increases polyglutamylation, and reciprocally. The precise function of polyglycylation is still unclear. Post-translationally, some glutamate residues at the C-terminus are polyglutamylated, resulting in polyglutamate chains on the gamma-carboxyl group. Polyglutamylation plays a key role in microtubule severing by spastin (SPAST). SPAST preferentially recognizes and acts on microtubules decorated with short polyglutamate tails: severing activity by SPAST increases as the number of glutamates per tubulin rises from one to eight, but decreases beyond this glutamylation threshold. Highly expressed in skeletal muscle.

Its subcellular location is the cytoplasm. It is found in the cytoskeleton. Functionally, tubulin is the major constituent of microtubules, a cylinder consisting of laterally associated linear protofilaments composed of alpha- and beta-tubulin heterodimers. Microtubules grow by the addition of GTP-tubulin dimers to the microtubule end, where a stabilizing cap forms. Below the cap, tubulin dimers are in GDP-bound state, owing to GTPase activity of alpha-tubulin. The sequence is that of Tubulin beta-1 chain from Gallus gallus (Chicken).